We begin with the raw amino-acid sequence, 230 residues long: Orotidine 5'-phosphate decarboxylase (230 aa).

Substrate-binding positions include Asp-12, Lys-34, 61 to 70, Thr-116, Arg-177, Gln-186, and Arg-207; that span reads DMKLLDIDNT. Lys-63 serves as the catalytic Proton donor.

Belongs to the OMP decarboxylase family. Type 1 subfamily. Homodimer.

The enzyme catalyses orotidine 5'-phosphate + H(+) = UMP + CO2. It functions in the pathway pyrimidine metabolism; UMP biosynthesis via de novo pathway; UMP from orotate: step 2/2. Its function is as follows. Catalyzes the decarboxylation of orotidine 5'-monophosphate (OMP) to uridine 5'-monophosphate (UMP). The sequence is that of Orotidine 5'-phosphate decarboxylase from Rhizobium rhizogenes (strain K84 / ATCC BAA-868) (Agrobacterium radiobacter).